The following is an 83-amino-acid chain: Ardiscretin (83 aa).

The signal sequence occupies residues 1–20 (MKGMIMLISCLMLIDVVVES). The 62-residue stretch at 21–82 (KNGYIIEPKG…IFDYYNNKCG (62 aa)) folds into the LCN-type CS-alpha/beta domain. 4 cysteine pairs are disulfide-bonded: C31-C81, C35-C57, C43-C62, and C47-C64. Cysteine amide is present on C81.

As to expression, expressed by the venom gland.

It is found in the secreted. Inhibits the sodium (Nav) currents in an apparent irreversible manner. Produces small depolarization and induces repetitive firing in squid axons. Is specific for arthropods (crickets, triatomides, crabs and squids), but is non-toxic to mice. Shows antibacterial activity against both Gram-positive and Gram-negative bacteria. In Tityus discrepans (Venezuelan scorpion), this protein is Ardiscretin.